Here is a 468-residue protein sequence, read N- to C-terminus: UDP-N-acetylmuramoyl-L-alanine--L-glutamate ligase (468 aa).

Gly-122 to Thr-128 contacts ATP.

Belongs to the MurCDEF family. MurD2 subfamily.

Its subcellular location is the cytoplasm. It catalyses the reaction UDP-N-acetyl-alpha-D-muramoyl-L-alanine + L-glutamate + ATP = UDP-N-acetyl-alpha-D-muramoyl-L-alanyl-L-glutamate + ADP + phosphate + H(+). The protein operates within cell wall biogenesis; peptidoglycan biosynthesis. In terms of biological role, cell wall formation. Catalyzes the addition of L-glutamate to the nucleotide precursor UDP-N-acetylmuramoyl-L-alanine. In Xanthomonas campestris pv. campestris (strain 8004), this protein is UDP-N-acetylmuramoyl-L-alanine--L-glutamate ligase.